Reading from the N-terminus, the 242-residue chain is AA9 family lytic polysaccharide monooxygenase F (242 aa).

The N-terminal stretch at 1–20 (MVQFKLSTASLLALASYAAA) is a signal peptide. Position 21 (His-21) interacts with Cu(2+). The segment at 31 to 53 (GQTYPGADPHNPNPESPGWQAEN) is disordered. Intrachain disulfides connect Cys-71-Cys-192 and Cys-112-Cys-116. Residue His-101 coordinates Cu(2+). O2 is bound by residues His-178 and Gln-187. Residue Tyr-189 participates in Cu(2+) binding.

Belongs to the polysaccharide monooxygenase AA9 family. It depends on Cu(2+) as a cofactor.

Its subcellular location is the secreted. The catalysed reaction is [(1-&gt;4)-beta-D-glucosyl]n+m + reduced acceptor + O2 = 4-dehydro-beta-D-glucosyl-[(1-&gt;4)-beta-D-glucosyl]n-1 + [(1-&gt;4)-beta-D-glucosyl]m + acceptor + H2O.. Lytic polysaccharide monooxygenase (LPMO) that depolymerizes crystalline and amorphous polysaccharides via the oxidation of scissile alpha- or beta-(1-4)-glycosidic bonds, yielding C1 or C4 oxidation products. Catalysis by LPMOs requires the reduction of the active-site copper from Cu(II) to Cu(I) by a reducing agent and H(2)O(2) or O(2) as a cosubstrate. Active on hemicelluloses, including xylan, glucomannan, and xyloglucan. Shows clear activity on cellooligosaccharides, generating C4 oxidation products. Has no activity on ivory nut mannan (INM), a linear beta-1,4-linked mannan without substitutions. This chain is AA9 family lytic polysaccharide monooxygenase F, found in Malbranchea cinnamomea (Thermophilic fungus).